We begin with the raw amino-acid sequence, 360 residues long: Photosystem II protein D1 (360 aa).

3 consecutive transmembrane segments (helical) span residues 30-47 (YVGWFGVLMIPCLLTAAA), 119-134 (HFLIGISAYMGRQWEL), and 143-157 (WICVAYSAPVSAAFA). Position 119 (H119) interacts with chlorophyll a. Y127 is a pheophytin a binding site. 2 residues coordinate [CaMn4O5] cluster: D171 and E190. A helical transmembrane segment spans residues 198 to 219 (FHMAGVAGMFGGSLFSAMHGSL). H199 serves as a coordination point for chlorophyll a. A quinone contacts are provided by residues H216 and 265–266 (SF). A Fe cation-binding site is contributed by H216. H273 is a binding site for Fe cation. The helical transmembrane segment at 275 to 289 (FLAVFPVVCVWLTSM) threads the bilayer. The [CaMn4O5] cluster site is built by H333, E334, D343, and A345. A propeptide spanning residues 346 to 360 (AAESTTVALSAPAIG) is cleaved from the precursor.

It belongs to the reaction center PufL/M/PsbA/D family. PSII is composed of 1 copy each of membrane proteins PsbA, PsbB, PsbC, PsbD, PsbE, PsbF, PsbH, PsbI, PsbJ, PsbK, PsbL, PsbM, PsbT, PsbX, PsbY, Psb30/Ycf12, peripheral proteins PsbO, CyanoQ (PsbQ), PsbU, PsbV and a large number of cofactors. It forms dimeric complexes. The D1/D2 heterodimer binds P680, chlorophylls that are the primary electron donor of PSII, and subsequent electron acceptors. It shares a non-heme iron and each subunit binds pheophytin, quinone, additional chlorophylls, carotenoids and lipids. D1 provides most of the ligands for the Mn4-Ca-O5 cluster of the oxygen-evolving complex (OEC). There is also a Cl(-1) ion associated with D1 and D2, which is required for oxygen evolution. The PSII complex binds additional chlorophylls, carotenoids and specific lipids. serves as cofactor. In terms of processing, tyr-162 forms a radical intermediate that is referred to as redox-active TyrZ, YZ or Y-Z. C-terminally processed by CtpA; processing is essential to allow assembly of the oxygen-evolving complex and thus photosynthetic growth.

It is found in the cellular thylakoid membrane. It carries out the reaction 2 a plastoquinone + 4 hnu + 2 H2O = 2 a plastoquinol + O2. Photosystem II (PSII) is a light-driven water:plastoquinone oxidoreductase that uses light energy to abstract electrons from H(2)O, generating O(2) and a proton gradient subsequently used for ATP formation. It consists of a core antenna complex that captures photons, and an electron transfer chain that converts photonic excitation into a charge separation. The D1/D2 (PsbA/PsbD) reaction center heterodimer binds P680, the primary electron donor of PSII as well as several subsequent electron acceptors. The protein is Photosystem II protein D1 of Prochlorococcus marinus (strain MIT 9301).